Reading from the N-terminus, the 523-residue chain is GMP synthase [glutamine-hydrolyzing] (523 aa).

The region spanning 8-205 (KILILDFGSQ…VVKICGCERN (198 aa)) is the Glutamine amidotransferase type-1 domain. Cysteine 85 acts as the Nucleophile in catalysis. Residues histidine 179 and glutamate 181 contribute to the active site. The 193-residue stretch at 206-398 (WTPENIIEDA…LGLPAEMLNR (193 aa)) folds into the GMPS ATP-PPase domain. An ATP-binding site is contributed by 233–239 (SGGVDSS).

As to quaternary structure, homodimer.

It carries out the reaction XMP + L-glutamine + ATP + H2O = GMP + L-glutamate + AMP + diphosphate + 2 H(+). It participates in purine metabolism; GMP biosynthesis; GMP from XMP (L-Gln route): step 1/1. Its function is as follows. Catalyzes the synthesis of GMP from XMP. In Pasteurella multocida (strain Pm70), this protein is GMP synthase [glutamine-hydrolyzing].